The following is a 58-amino-acid chain: Large ribosomal subunit protein bL32 (58 aa).

The protein belongs to the bacterial ribosomal protein bL32 family.

In Carboxydothermus hydrogenoformans (strain ATCC BAA-161 / DSM 6008 / Z-2901), this protein is Large ribosomal subunit protein bL32.